A 208-amino-acid polypeptide reads, in one-letter code: MKIVEVKHPLVKHKLGLMRAADINTKDFRALATEVGSLLTYEATTDLETEAIEIDGWCGKVEVERIKGKKVTVVPILRAGLGMMDGVLEHIPSARISVVGIYRNEETLEPVPYFTKLANDVEERLAIIVDPMLATGGSMIATIDLLKKAGCKQIKVLVLVAAPEGIKALEAAHPDVELYTASIDSHLNEHGYIVPGLGDAGDKIFGTK.

5-phospho-alpha-D-ribose 1-diphosphate-binding positions include Arg78, Arg103, and 130 to 138 (DPMLATGGS). Residues Ile193 and 198–200 (GDA) each bind uracil. Asp199 contributes to the 5-phospho-alpha-D-ribose 1-diphosphate binding site.

This sequence belongs to the UPRTase family. Requires Mg(2+) as cofactor.

It carries out the reaction UMP + diphosphate = 5-phospho-alpha-D-ribose 1-diphosphate + uracil. It participates in pyrimidine metabolism; UMP biosynthesis via salvage pathway; UMP from uracil: step 1/1. Allosterically activated by GTP. In terms of biological role, catalyzes the conversion of uracil and 5-phospho-alpha-D-ribose 1-diphosphate (PRPP) to UMP and diphosphate. This is Uracil phosphoribosyltransferase from Actinobacillus pleuropneumoniae serotype 5b (strain L20).